A 300-amino-acid polypeptide reads, in one-letter code: Probable amino-acid ABC transporter periplasmic-binding protein y4tE (300 aa).

The signal sequence occupies residues 1 to 27 (MTHLKISKTAPAVARFLPAGRIASVAA).

It belongs to the bacterial solute-binding protein 3 family.

Its subcellular location is the periplasm. Probably part of the binding-protein-dependent transport system y4tEFGH for an amino acid. The sequence is that of Probable amino-acid ABC transporter periplasmic-binding protein y4tE from Sinorhizobium fredii (strain NBRC 101917 / NGR234).